The following is a 247-amino-acid chain: ATP synthase subunit a, chloroplastic (247 aa).

5 helical membrane-spanning segments follow: residues 38 to 58 (QVLI…IIAV), 95 to 115 (VPFI…GALL), 134 to 154 (INTT…AGLT), 199 to 219 (LVVV…VMFL), and 220 to 240 (GLFT…AYIG).

This sequence belongs to the ATPase A chain family. In terms of assembly, F-type ATPases have 2 components, CF(1) - the catalytic core - and CF(0) - the membrane proton channel. CF(1) has five subunits: alpha(3), beta(3), gamma(1), delta(1), epsilon(1). CF(0) has four main subunits: a, b, b' and c.

It is found in the plastid. It localises to the chloroplast thylakoid membrane. In terms of biological role, key component of the proton channel; it plays a direct role in the translocation of protons across the membrane. The polypeptide is ATP synthase subunit a, chloroplastic (Dioscorea elephantipes (Elephant's foot yam)).